We begin with the raw amino-acid sequence, 609 residues long: Replication protein A 70 kDa DNA-binding subunit (609 aa).

Residues 113-163 (GNPQPYNDGQPQPAAPAPASAPAPAPSKLQNNSAPPPSMNRGTSKLFGGGS) form a disordered region. Pro residues predominate over residues 125–137 (PAAPAPASAPAPA). Residues 188-272 (WTVRARVTNK…VKNDYEMTFN (85 aa)) constitute a DNA-binding region (OB). The segment at 472–494 (CPSQDCNKKVIDQQNGLFRCEKC) adopts a C4-type zinc-finger fold.

Belongs to the replication factor A protein 1 family. As to quaternary structure, component of the heterotrimeric canonical replication protein A complex (RPA). Interacts with rpain-a.

It localises to the nucleus. The protein localises to the PML body. Its function is as follows. As part of the heterotrimeric replication protein A complex (RPA/RP-A), binds and stabilizes single-stranded DNA intermediates, that form during DNA replication or upon DNA stress. It prevents their reannealing and in parallel, recruits and activates different proteins and complexes involved in DNA metabolism. Thereby, it plays an essential role both in DNA replication and the cellular response to DNA damage. The sequence is that of Replication protein A 70 kDa DNA-binding subunit (rpa1) from Xenopus laevis (African clawed frog).